Consider the following 163-residue polypeptide: uncharacterized protein (163 aa).

Basic and acidic residues predominate over residues 1–10; sequence MGVPRAREGR. The interval 1 to 163 is disordered; that stretch reads MGVPRAREGR…WSFTPLRWGS (163 aa).

This is an uncharacterized protein from Homo sapiens (Human).